The chain runs to 419 residues: Tyrosine--tRNA ligase (419 aa).

Y36 contacts L-tyrosine. The 'HIGH' region motif lies at 41–50 (PTGDSMHIGH). L-tyrosine-binding residues include Y168 and Q172. The 'KMSKS' region motif lies at 230–234 (KFGKT). Position 233 (K233) interacts with ATP. The S4 RNA-binding domain maps to 352–419 (KNIVDFLVDA…KKKYFLARVK (68 aa)).

Belongs to the class-I aminoacyl-tRNA synthetase family. TyrS type 1 subfamily. As to quaternary structure, homodimer.

The protein localises to the cytoplasm. The enzyme catalyses tRNA(Tyr) + L-tyrosine + ATP = L-tyrosyl-tRNA(Tyr) + AMP + diphosphate + H(+). Functionally, catalyzes the attachment of tyrosine to tRNA(Tyr) in a two-step reaction: tyrosine is first activated by ATP to form Tyr-AMP and then transferred to the acceptor end of tRNA(Tyr). The polypeptide is Tyrosine--tRNA ligase (Latilactobacillus sakei subsp. sakei (strain 23K) (Lactobacillus sakei subsp. sakei)).